The chain runs to 184 residues: Endoribonuclease YbeY (184 aa).

Zn(2+)-binding residues include histidine 118, histidine 122, and histidine 128. The tract at residues 156–184 (YHQDRQSQKDQRLLDKSRYFDELNHGDTP) is disordered. The segment covering 157–184 (HQDRQSQKDQRLLDKSRYFDELNHGDTP) has biased composition (basic and acidic residues).

Belongs to the endoribonuclease YbeY family. Zn(2+) is required as a cofactor.

It is found in the cytoplasm. In terms of biological role, single strand-specific metallo-endoribonuclease involved in late-stage 70S ribosome quality control and in maturation of the 3' terminus of the 16S rRNA. The protein is Endoribonuclease YbeY of Mycolicibacterium vanbaalenii (strain DSM 7251 / JCM 13017 / BCRC 16820 / KCTC 9966 / NRRL B-24157 / PYR-1) (Mycobacterium vanbaalenii).